The sequence spans 328 residues: DNA-directed RNA polymerase subunit alpha (328 aa).

The segment at 1 to 232 (MSTQGFLKPR…DQISVFAALE (232 aa)) is alpha N-terminal domain (alpha-NTD). The tract at residues 248-328 (IDPVLLRPVD…NWPPLGLERP (81 aa)) is alpha C-terminal domain (alpha-CTD).

It belongs to the RNA polymerase alpha chain family. Homodimer. The RNAP catalytic core consists of 2 alpha, 1 beta, 1 beta' and 1 omega subunit. When a sigma factor is associated with the core the holoenzyme is formed, which can initiate transcription.

It catalyses the reaction RNA(n) + a ribonucleoside 5'-triphosphate = RNA(n+1) + diphosphate. In terms of biological role, DNA-dependent RNA polymerase catalyzes the transcription of DNA into RNA using the four ribonucleoside triphosphates as substrates. This is DNA-directed RNA polymerase subunit alpha from Bordetella petrii (strain ATCC BAA-461 / DSM 12804 / CCUG 43448).